Consider the following 615-residue polypeptide: uncharacterized protein (615 aa).

A Phosphoserine modification is found at S48. Positions 424–433 are enriched in acidic residues; that stretch reads DRENELEEGS. The tract at residues 424–615 is disordered; the sequence is DRENELEEGS…YARKKTKKNV (192 aa). Composition is skewed to basic and acidic residues over residues 439 to 476, 484 to 496, 504 to 521, and 529 to 561; these read DNER…KEVG, DGNK…KEVA, ESEK…KEVA, and ESEK…EPSK. Basic residues-rich tracts occupy residues 579–589 and 606–615; these read KKPKVVKKVAK and YARKKTKKNV.

This is an uncharacterized protein from Arabidopsis thaliana (Mouse-ear cress).